The chain runs to 156 residues: ATP synthase subunit b (156 aa).

The chain crosses the membrane as a helical span at residues 7–27 (LIGQTIAFIVFVWFCMKFVWP).

It belongs to the ATPase B chain family. In terms of assembly, F-type ATPases have 2 components, F(1) - the catalytic core - and F(0) - the membrane proton channel. F(1) has five subunits: alpha(3), beta(3), gamma(1), delta(1), epsilon(1). F(0) has three main subunits: a(1), b(2) and c(10-14). The alpha and beta chains form an alternating ring which encloses part of the gamma chain. F(1) is attached to F(0) by a central stalk formed by the gamma and epsilon chains, while a peripheral stalk is formed by the delta and b chains.

Its subcellular location is the cell inner membrane. In terms of biological role, f(1)F(0) ATP synthase produces ATP from ADP in the presence of a proton or sodium gradient. F-type ATPases consist of two structural domains, F(1) containing the extramembraneous catalytic core and F(0) containing the membrane proton channel, linked together by a central stalk and a peripheral stalk. During catalysis, ATP synthesis in the catalytic domain of F(1) is coupled via a rotary mechanism of the central stalk subunits to proton translocation. Component of the F(0) channel, it forms part of the peripheral stalk, linking F(1) to F(0). This is ATP synthase subunit b from Idiomarina loihiensis (strain ATCC BAA-735 / DSM 15497 / L2-TR).